The sequence spans 316 residues: Neutrophil-stimulating factor 1 (316 aa).

The first 21 residues, 1–21 (METSLPITVVFLIVLITGAQT), serve as a signal peptide directing secretion. Residues 126–316 (HGEMLERMTA…WFAVSWNDRG (191 aa)) are involved in interaction with human CD47. Asparagine 169 carries an N-linked (GlcNAc...) asparagine glycan.

Interacts with human CD4. Interacts with human CD47; the interaction results in inhibition of phagocytosis activity of host macrophages. As to expression, female salivary gland (at protein level). Saliva (at protein level). Some expression in ovary and midgut (at protein level).

It is found in the secreted. Functionally, activates host neutrophils; induces expression of IL1B and CXCL2 at the bite site. Promotes activation of human CD4(+) T-cells. Inhibits phagocytosis activity of host macrophages via the interaction with CD47 receptor on their surface. Suppresses expression of pro-inflammatory cytokines, such as IFN-gamma/IFNG, IL2, TNF-alpha/TNF, IL12B, IL8/CXCL8, IL6, in host white blood cells. Reduces host polymorphonuclear neutrophil chemotaxis induced by N-formylmethionine-leucylphenylalanine (fMLF). Reduces CD11b/ITGAM expression in fMLF-induced host polymorphonuclear neutrophils. In terms of biological role, (Microbial infection) Enhances early replication of Zika virus in the host. The protein is Neutrophil-stimulating factor 1 of Aedes aegypti (Yellowfever mosquito).